The following is a 502-amino-acid chain: Alpha-ketoglutarate-dependent dioxygenase FTO (502 aa).

The fe2OG dioxygenase domain stretch occupies residues 32–324 (TPKDDEFYQQ…SSTHRVAECS (293 aa)). Residues Arg96 and Tyr108 each coordinate substrate. Asn202 serves as a coordination point for 2-oxoglutarate. The segment at 210–221 (PYLKEEPYFGMG) is loop L1; predicted to block binding of double-stranded DNA or RNA. Lys213 bears the N6-acetyllysine mark. Residues His228 and Asp230 each contribute to the Fe cation site. 228-231 (HHDE) contacts substrate. Tyr292 serves as a coordination point for 2-oxoglutarate. His304 contributes to the Fe cation binding site. Residues 313–315 (RFS), Thr317, and Arg319 contribute to the 2-oxoglutarate site.

Belongs to the fto family. In terms of assembly, monomer. May also exist as homodimer. Fe(2+) is required as a cofactor. Ubiquitous. Highly expressed in teeth and weakly in bone.

The protein localises to the nucleus. It localises to the nucleus speckle. The protein resides in the cytoplasm. It catalyses the reaction a 5'-end (N(7)-methyl 5'-triphosphoguanosine)-(N(6),2'-O-dimethyladenosine) in mRNA + 2-oxoglutarate + O2 = a 5'-end (N(7)-methyl 5'-triphosphoguanosine)-(2'-O-methyladenosine) in mRNA + formaldehyde + succinate + CO2. It carries out the reaction an N(6)-methyladenosine in mRNA + 2-oxoglutarate + O2 = an adenosine in mRNA + formaldehyde + succinate + CO2. The enzyme catalyses N(6)-methyladenosine in U6 snRNA + 2-oxoglutarate + O2 = adenosine in U6 snRNA + formaldehyde + succinate + CO2. The catalysed reaction is a 5'-end (N(7)-methyl 5'-triphosphoguanosine)-(N(6),2'-O-dimethyladenosine) in U6 snRNA + 2-oxoglutarate + O2 = a 5'-end (N(7)-methyl 5'-triphosphoguanosine)-(2'-O-methyladenosine) in U6 snRNA + formaldehyde + succinate + CO2. It catalyses the reaction an N(1)-methyladenosine in tRNA + 2-oxoglutarate + O2 = an adenosine in tRNA + formaldehyde + succinate + CO2. Activated by ascorbate. Inhibited by N-oxalylglycine, fumarate and succinate. Functionally, RNA demethylase that mediates oxidative demethylation of different RNA species, such as mRNAs, tRNAs and snRNAs, and acts as a regulator of fat mass, adipogenesis and energy homeostasis. Specifically demethylates N(6)-methyladenosine (m6A) RNA, the most prevalent internal modification of messenger RNA (mRNA) in higher eukaryotes. M6A demethylation by FTO affects mRNA expression and stability. Also able to demethylate m6A in U6 small nuclear RNA (snRNA). Mediates demethylation of N(6),2'-O-dimethyladenosine cap (m6A(m)), by demethylating the N(6)-methyladenosine at the second transcribed position of mRNAs and U6 snRNA. Demethylation of m6A(m) in the 5'-cap by FTO affects mRNA stability by promoting susceptibility to decapping. Also acts as a tRNA demethylase by removing N(1)-methyladenine from various tRNAs. Has no activity towards 1-methylguanine. Has no detectable activity towards double-stranded DNA. Also able to repair alkylated DNA and RNA by oxidative demethylation: demethylates single-stranded RNA containing 3-methyluracil, single-stranded DNA containing 3-methylthymine and has low demethylase activity towards single-stranded DNA containing 1-methyladenine or 3-methylcytosine. Ability to repair alkylated DNA and RNA is however unsure in vivo. Involved in the regulation of fat mass, adipogenesis and body weight, thereby contributing to the regulation of body size and body fat accumulation. Involved in the regulation of thermogenesis and the control of adipocyte differentiation into brown or white fat cells. Regulates activity of the dopaminergic midbrain circuitry via its ability to demethylate m6A in mRNAs. This chain is Alpha-ketoglutarate-dependent dioxygenase FTO, found in Rattus norvegicus (Rat).